The chain runs to 315 residues: Sulfate adenylyltransferase subunit 2 1 (315 aa).

The tract at residues 287-315 is disordered; that stretch reads DSSSSERQGRAIDHDQSGSMERKKREGYF. The span at 293–315 shows a compositional bias: basic and acidic residues; it reads RQGRAIDHDQSGSMERKKREGYF.

It belongs to the PAPS reductase family. CysD subfamily. Heterodimer composed of CysD, the smaller subunit, and CysN.

The catalysed reaction is sulfate + ATP + H(+) = adenosine 5'-phosphosulfate + diphosphate. Its pathway is sulfur metabolism; hydrogen sulfide biosynthesis; sulfite from sulfate: step 1/3. With CysN forms the ATP sulfurylase (ATPS) that catalyzes the adenylation of sulfate producing adenosine 5'-phosphosulfate (APS) and diphosphate, the first enzymatic step in sulfur assimilation pathway. APS synthesis involves the formation of a high-energy phosphoric-sulfuric acid anhydride bond driven by GTP hydrolysis by CysN coupled to ATP hydrolysis by CysD. The protein is Sulfate adenylyltransferase subunit 2 1 of Alkalilimnicola ehrlichii (strain ATCC BAA-1101 / DSM 17681 / MLHE-1).